The chain runs to 33 residues: Large ribosomal subunit protein eL28 (33 aa).

It belongs to the eukaryotic ribosomal protein eL28 family. Component of the large ribosomal subunit.

Its subcellular location is the cytoplasm. Functionally, component of the large ribosomal subunit. The ribosome is a large ribonucleoprotein complex responsible for the synthesis of proteins in the cell. The protein is Large ribosomal subunit protein eL28 (rpl28) of Xenopus laevis (African clawed frog).